The primary structure comprises 218 residues: MAAPRISFSPSDILFGVLDRLFKDNATGKVLASRVAVVILLFMMAIVWYRGDSFFEYYKQSKYETYSEIIEKERNARFESVALEQLQIVHISSEADFSAVYSFRPKNLNYFVDIIAYEGKLPSTISEKSLGGYPVDKTMDEYTVHLNGRHYYSNSKFAFLPTKKPTPEINYMYSCPYFNLDNIYAGTITMYWYRNDHISNDRLESICSQAARILGRAK.

Topologically, residues 1 to 34 (MAAPRISFSPSDILFGVLDRLFKDNATGKVLASR) are cytoplasmic. Residues 35-49 (VAVVILLFMMAIVWY) form a helical; Signal-anchor for type II membrane protein membrane-spanning segment. Over 50 to 218 (RGDSFFEYYK…QAARILGRAK (169 aa)) the chain is Periplasmic. Cysteine 175 and cysteine 207 are joined by a disulfide.

This sequence belongs to the T4likevirus holin family. As to quaternary structure, homomultimer. Heterotetramer composed of 2 holin and 2 antiholin. The holin-antiholin complex binds dsDNA. Interacts (via C-terminus) with antiholin (via C-terminus); this interaction blocks the holin homomultimerization and delays host cell lysis. Interacts (via N-terminus) with the lysis inhibition accessory protein rIII; this interaction stabilizes the holin-antiholin complex thereby resulting in a robust block of the hole formation. In terms of processing, disulfide bond is required for functionality.

Its subcellular location is the host cell inner membrane. In terms of biological role, accumulates harmlessly in the cytoplasmic membrane until it reaches a critical concentration that triggers the formation of micron-scale pores (holes) causing host cell membrane disruption and endolysin escape into the periplasmic space. Determines the precise timing of host cell lysis. Regulated by specific antiholins that somehow sense superinfections and then delay lysis. Participates with the endolysin and spanin proteins in the sequential events which lead to the programmed host cell lysis releasing the mature viral particles from the host cell. This chain is Holin (T), found in Enterobacteria phage K3 (Bacteriophage K3).